The primary structure comprises 253 residues: MLCPAWLLAVAVVGVVRGVKGQCWENPRCHDLSSENNLLECIQLCRSDLTTKSPIFPVKVHLQPPSPSDSDSPPLYLPLSLLSPSSPLYPTEQQNSVSPQAKRSYSMEHFRWGKPVGRKRRPVKVYTNGVEEESSEAFPSEMRRELGTDDAVYPSLEAGTAEGGEAEGMEGVFSLQEKKDGSYKMNHFRWSGPPASKRYGGFMKSWDERSQKPLLTLFKNVIIKDGQQKREQWGREEGEEKRALGERKYHFQG.

The N-terminal stretch at 1 to 21 (MLCPAWLLAVAVVGVVRGVKG) is a signal peptide. Glutamine 22 is modified (pyrrolidone carboxylic acid). Intrachain disulfides connect cysteine 23–cysteine 45 and cysteine 29–cysteine 41. Position 104 is an N-acetylserine; in Corticotropin (serine 104). Valine 116 carries the post-translational modification Valine amide. Positions 228 to 253 (QKREQWGREEGEEKRALGERKYHFQG) are disordered. The residue at position 252 (glutamine 252) is a Glutamine amide; partial.

Belongs to the POMC family. Specific enzymatic cleavages at paired basic residues yield the different active peptides. Post-translationally, acetylation of beta-endorphin occurs in a tissue-specific manner. C-terminal peptide 1 and C-terminal peptide 2 are detected in the anterior part of the nucleus lateralis tuberis of hypothalamus, in dorsal hypothalamus, thalamus, telencephalon, optic tectum and medulla oblongata (at protein level). Expressed in pituitary and hypothalamus of adult diploid animals, and hypothalamus of triploid and ovulated female trout.

It is found in the secreted. Its function is as follows. Stimulates the adrenal glands to release cortisol. In terms of biological role, melanocyte-stimulating hormone alpha: Anorexigenic peptide. Increases the pigmentation of skin by increasing melanin production in melanocytes. Melanocyte-stimulating hormone beta: Increases the pigmentation of skin by increasing melanin production in melanocytes. Functionally, beta-endorphin: Endogenous orexigenic opiate. Its function is as follows. Endogenous opiate. The sequence is that of Pro-opiomelanocortin A (pomca) from Oncorhynchus mykiss (Rainbow trout).